Consider the following 130-residue polypeptide: Small ribosomal subunit protein uS8A (130 aa).

The protein belongs to the universal ribosomal protein uS8 family. In terms of assembly, component of the small ribosomal subunit (SSU). Mature yeast ribosomes consist of a small (40S) and a large (60S) subunit. The 40S small subunit contains 1 molecule of ribosomal RNA (18S rRNA) and 33 different proteins (encoded by 57 genes). The large 60S subunit contains 3 rRNA molecules (25S, 5.8S and 5S rRNA) and 46 different proteins (encoded by 81 genes).

It is found in the cytoplasm. Its function is as follows. Component of the ribosome, a large ribonucleoprotein complex responsible for the synthesis of proteins in the cell. The small ribosomal subunit (SSU) binds messenger RNAs (mRNAs) and translates the encoded message by selecting cognate aminoacyl-transfer RNA (tRNA) molecules. The large subunit (LSU) contains the ribosomal catalytic site termed the peptidyl transferase center (PTC), which catalyzes the formation of peptide bonds, thereby polymerizing the amino acids delivered by tRNAs into a polypeptide chain. The nascent polypeptides leave the ribosome through a tunnel in the LSU and interact with protein factors that function in enzymatic processing, targeting, and the membrane insertion of nascent chains at the exit of the ribosomal tunnel. This chain is Small ribosomal subunit protein uS8A, found in Saccharomyces cerevisiae (strain ATCC 204508 / S288c) (Baker's yeast).